The sequence spans 901 residues: Valine--tRNA ligase (901 aa).

The segment at 1–37 (MLPGCYTHRLNMSDTQDPPQDESTTDESADALDGEYD) is disordered. The span at 19-35 (PQDESTTDESADALDGE) shows a compositional bias: acidic residues. The short motif at 72-82 (PTVSGNLHMGH) is the 'HIGH' region element. Positions 572-576 (AMSKS) match the 'KMSKS' region motif. Position 575 (Lys575) interacts with ATP.

Belongs to the class-I aminoacyl-tRNA synthetase family. ValS type 2 subfamily.

The protein resides in the cytoplasm. It catalyses the reaction tRNA(Val) + L-valine + ATP = L-valyl-tRNA(Val) + AMP + diphosphate. In terms of biological role, catalyzes the attachment of valine to tRNA(Val). As ValRS can inadvertently accommodate and process structurally similar amino acids such as threonine, to avoid such errors, it has a 'posttransfer' editing activity that hydrolyzes mischarged Thr-tRNA(Val) in a tRNA-dependent manner. The sequence is that of Valine--tRNA ligase from Haloarcula marismortui (strain ATCC 43049 / DSM 3752 / JCM 8966 / VKM B-1809) (Halobacterium marismortui).